A 481-amino-acid chain; its full sequence is RuvB-like helicase 2 (481 aa).

73–80 (GEPSTGKT) contributes to the ATP binding site. The tract at residues 453–481 (EEVERDPAAGGGAKRRVEGGGGDAQPMEH) is disordered.

This sequence belongs to the RuvB family. Forms homohexameric rings. May form a dodecamer with rept made of two stacked hexameric rings. Component of the chromatin remodeling Ino80 complex. Interacts with Myc and pont. As to expression, higher expression occurs in primordia of mesoderm, anterior and posterior midgut and cephalic furrow early in gastrulation, as well as in endoderm and mesoderm lineages during germ band extension. Later in development expression is only maintained in endoderm cells. Expressed in thoracic and abdominal segment neural precursors of all embryonic chordotonal organs.

The protein localises to the nucleus. The catalysed reaction is ATP + H2O = ADP + phosphate + H(+). In terms of biological role, acts as a transcriptional coactivator in Wg signaling caused by altered arm signaling. Pont and rept interfere antagonistically with nuclear arm signaling function, and are required to enhance or reduce arm activity, respectively. Also an essential cofactor for the normal function of Myc; required for cellular proliferation and growth. Its function is as follows. Proposed core component of the chromatin remodeling Ino80 complex which is involved in transcriptional regulation, DNA replication and probably DNA repair. The chain is RuvB-like helicase 2 from Drosophila melanogaster (Fruit fly).